The chain runs to 212 residues: Agamous-like MADS-box protein MADS9 (212 aa).

The MADS-box domain occupies 1-61 (MGRGKIEIKR…GKMHEYCSPS (61 aa)). Residues 84–170 (HENLNNELDR…NYIVHHQGMP (87 aa)) enclose the K-box domain.

Expressed during flower development in stamens and petals.

Its subcellular location is the nucleus. Probable transcription factor that may play role in specifying stamen and petal organ identity. The sequence is that of Agamous-like MADS-box protein MADS9 from Vitis vinifera (Grape).